Here is a 273-residue protein sequence, read N- to C-terminus: Shikimate dehydrogenase (NADP(+)) (273 aa).

Shikimate is bound by residues 19-21 and T66; that span reads SQS. Residue K70 is the Proton acceptor of the active site. E82 serves as a coordination point for NADP(+). Shikimate contacts are provided by N91 and D107. NADP(+)-binding positions include 131–135 and M217; that span reads GAGGA. Y219 contacts shikimate. G241 serves as a coordination point for NADP(+).

Belongs to the shikimate dehydrogenase family. Homodimer.

The enzyme catalyses shikimate + NADP(+) = 3-dehydroshikimate + NADPH + H(+). It participates in metabolic intermediate biosynthesis; chorismate biosynthesis; chorismate from D-erythrose 4-phosphate and phosphoenolpyruvate: step 4/7. In terms of biological role, involved in the biosynthesis of the chorismate, which leads to the biosynthesis of aromatic amino acids. Catalyzes the reversible NADPH linked reduction of 3-dehydroshikimate (DHSA) to yield shikimate (SA). The sequence is that of Shikimate dehydrogenase (NADP(+)) from Buchnera aphidicola subsp. Schizaphis graminum (strain Sg).